The chain runs to 171 residues: UPF0316 protein Exig_2248 (171 aa).

3 helical membrane passes run 4–24, 31–51, and 57–77; these read ILLILLLQLIYVPVLTLRTIM, IIAGVLGTVETLIYIFALGIV, and TVGMIVYALGFGLGILIGGFV.

The protein belongs to the UPF0316 family.

The protein localises to the cell membrane. This chain is UPF0316 protein Exig_2248, found in Exiguobacterium sibiricum (strain DSM 17290 / CCUG 55495 / CIP 109462 / JCM 13490 / 255-15).